The primary structure comprises 343 residues: MPKICILGSGSWGTAQALLLSSKEFQVILWGRIEDGVDSLQQDRENRRFLPGIRLSDTIVATSDLARALKGADIVVMAVPSQSLREVLEKARPYLGKDSCLVNTAKGLEISSGMRMSQVVEDVLGKQSRERYAVLSGPSHAEEVARNIPTAITVASYHKENAFLVQDLYMTPFFRVYTNPDVAGVELGGALKNIIALGTGIASGLGYGDNTQAALLTRGLHEIIRMGEAMGGEARTFSGLSGIGDLVVTCSSRHSRNRQAGILIGQGYSLEETLKQIAMVVEGAHTIRVVHRLACQLRIDMPICTACYNVLYANRKARDEVDDLMRRQKKHEIEEIVKRKKGW.

NADPH contacts are provided by S11, W12, R32, and K106. K106, G137, and S139 together coordinate sn-glycerol 3-phosphate. NADPH is bound at residue A141. K192, D245, S255, R256, and N257 together coordinate sn-glycerol 3-phosphate. Catalysis depends on K192, which acts as the Proton acceptor. R256 contacts NADPH. V280 and E282 together coordinate NADPH.

Belongs to the NAD-dependent glycerol-3-phosphate dehydrogenase family.

The protein resides in the cytoplasm. The enzyme catalyses sn-glycerol 3-phosphate + NAD(+) = dihydroxyacetone phosphate + NADH + H(+). It carries out the reaction sn-glycerol 3-phosphate + NADP(+) = dihydroxyacetone phosphate + NADPH + H(+). It functions in the pathway membrane lipid metabolism; glycerophospholipid metabolism. Functionally, catalyzes the reduction of the glycolytic intermediate dihydroxyacetone phosphate (DHAP) to sn-glycerol 3-phosphate (G3P), the key precursor for phospholipid synthesis. The chain is Glycerol-3-phosphate dehydrogenase [NAD(P)+] from Syntrophomonas wolfei subsp. wolfei (strain DSM 2245B / Goettingen).